We begin with the raw amino-acid sequence, 194 residues long: uncharacterized protein (194 aa).

This is an uncharacterized protein from Aquifex aeolicus (strain VF5).